Consider the following 213-residue polypeptide: Large ribosomal subunit protein uL3 (213 aa).

Belongs to the universal ribosomal protein uL3 family. In terms of assembly, part of the 50S ribosomal subunit. Forms a cluster with proteins L14 and L19.

In terms of biological role, one of the primary rRNA binding proteins, it binds directly near the 3'-end of the 23S rRNA, where it nucleates assembly of the 50S subunit. In Petrotoga mobilis (strain DSM 10674 / SJ95), this protein is Large ribosomal subunit protein uL3.